Reading from the N-terminus, the 345-residue chain is Uroporphyrinogen decarboxylase (345 aa).

Substrate is bound by residues 27 to 31 (RQAGR), F46, D76, Y152, S207, and H320.

Belongs to the uroporphyrinogen decarboxylase family. Homodimer.

It localises to the cytoplasm. It carries out the reaction uroporphyrinogen III + 4 H(+) = coproporphyrinogen III + 4 CO2. The protein operates within porphyrin-containing compound metabolism; protoporphyrin-IX biosynthesis; coproporphyrinogen-III from 5-aminolevulinate: step 4/4. In terms of biological role, catalyzes the decarboxylation of four acetate groups of uroporphyrinogen-III to yield coproporphyrinogen-III. The chain is Uroporphyrinogen decarboxylase from Geobacillus sp. (strain WCH70).